The following is a 442-amino-acid chain: Putative aminohydrolase SsnA (442 aa).

Residues His62, His64, His227, and Asp312 each contribute to the Zn(2+) site.

Belongs to the metallo-dependent hydrolases superfamily. ATZ/TRZ family.

The polypeptide is Putative aminohydrolase SsnA (ssnA) (Escherichia coli (strain K12)).